Reading from the N-terminus, the 346-residue chain is Phosphate acyltransferase (346 aa).

It belongs to the PlsX family. As to quaternary structure, homodimer. Probably interacts with PlsY.

The protein resides in the cytoplasm. The enzyme catalyses a fatty acyl-[ACP] + phosphate = an acyl phosphate + holo-[ACP]. Its pathway is lipid metabolism; phospholipid metabolism. Functionally, catalyzes the reversible formation of acyl-phosphate (acyl-PO(4)) from acyl-[acyl-carrier-protein] (acyl-ACP). This enzyme utilizes acyl-ACP as fatty acyl donor, but not acyl-CoA. The chain is Phosphate acyltransferase from Geotalea daltonii (strain DSM 22248 / JCM 15807 / FRC-32) (Geobacter daltonii).